The following is a 205-amino-acid chain: Adenylyl-sulfate kinase (205 aa).

An ATP-binding site is contributed by 31-38 (GLSGAGKS). The Phosphoserine intermediate role is filled by Ser-105.

It belongs to the APS kinase family.

The enzyme catalyses adenosine 5'-phosphosulfate + ATP = 3'-phosphoadenylyl sulfate + ADP + H(+). The protein operates within sulfur metabolism; hydrogen sulfide biosynthesis; sulfite from sulfate: step 2/3. Its function is as follows. Catalyzes the synthesis of activated sulfate. The polypeptide is Adenylyl-sulfate kinase (Shewanella baltica (strain OS155 / ATCC BAA-1091)).